The following is a 490-amino-acid chain: AP-5 complex subunit mu-1 (490 aa).

An MHD domain is found at 206-476 (KPQVSISITE…LISSDYYIWN (271 aa)).

The protein belongs to the adaptor complexes medium subunit family. In terms of assembly, probably part of the adaptor protein complex 5 (AP-5) a tetramer composed of AP5B1, AP5M1, AP5S1 and AP5Z1.

Its subcellular location is the cytoplasm. It localises to the cytosol. The protein localises to the late endosome membrane. It is found in the lysosome membrane. Functionally, as part of AP-5, a probable fifth adaptor protein complex it may be involved in endosomal transport. This Bos taurus (Bovine) protein is AP-5 complex subunit mu-1 (AP5M1).